The sequence spans 463 residues: Interstitial collagenase B (463 aa).

Positions 1–17 are cleaved as a signal peptide; it reads MPSLPLLLRLWAASSYS. The propeptide at 18–96 is activation peptide; the sequence is FPVIQDGLQK…PRCGVPDVAP (79 aa). The Cysteine switch signature appears at 87–94; sequence PRCGVPDV. Cys89 lines the Zn(2+) pocket. A metalloprotease region spans residues 95–273; sequence APYAITHNNP…PIQLTDATLD (179 aa). Asp155 contributes to the Ca(2+) binding site. Zn(2+) is bound by residues His165 and Asp167. Positions 172 and 173 each coordinate Ca(2+). His180 contacts Zn(2+). Residues Gly187 and Gly189 each contribute to the Ca(2+) site. Residue His193 participates in Zn(2+) binding. A Ca(2+)-binding site is contributed by Asp195. His215 serves as a coordination point for Zn(2+). Residue Glu216 is part of the active site. Zn(2+) is bound by residues His219 and His225. A disulfide bridge links Cys275 with Cys463. Hemopexin repeat units lie at residues 278–321 and 322–368; these read GLTF…WPNL and PGKF…FGFP. Asp282 lines the Ca(2+) pocket. A glycan (N-linked (GlcNAc...) asparagine) is linked at Asn370. 2 Hemopexin repeats span residues 371–419 and 420–463; these read VTNI…FPGI and DYKV…WFNC. Ca(2+) is bound by residues Asp375 and Asp424.

Belongs to the peptidase M10A family. Ca(2+) serves as cofactor. Requires Zn(2+) as cofactor.

The protein localises to the secreted. Its subcellular location is the extracellular space. It localises to the extracellular matrix. The enzyme catalyses Cleavage of the triple helix of collagen at about three-quarters of the length of the molecule from the N-terminus, at 775-Gly-|-Ile-776 in the alpha1(I) chain. Cleaves synthetic substrates and alpha-macroglobulins at bonds where P1' is a hydrophobic residue.. Its activity is regulated as follows. Can be activated without removal of the activation peptide. This is Interstitial collagenase B (Mmp1b) from Mus musculus (Mouse).